The following is a 278-amino-acid chain: Shikimate dehydrogenase (NADP(+)) (278 aa).

Residues 19 to 21 (SFS) and Thr66 each bind shikimate. Residue Lys70 is the Proton acceptor of the active site. Shikimate contacts are provided by Asn91 and Asp106. NADP(+) is bound by residues 130–134 (GSGGA) and Leu222. Shikimate is bound at residue Tyr224. Gly245 provides a ligand contact to NADP(+).

This sequence belongs to the shikimate dehydrogenase family. As to quaternary structure, homodimer.

It carries out the reaction shikimate + NADP(+) = 3-dehydroshikimate + NADPH + H(+). It functions in the pathway metabolic intermediate biosynthesis; chorismate biosynthesis; chorismate from D-erythrose 4-phosphate and phosphoenolpyruvate: step 4/7. Involved in the biosynthesis of the chorismate, which leads to the biosynthesis of aromatic amino acids. Catalyzes the reversible NADPH linked reduction of 3-dehydroshikimate (DHSA) to yield shikimate (SA). The polypeptide is Shikimate dehydrogenase (NADP(+)) (Methanococcus maripaludis (strain DSM 14266 / JCM 13030 / NBRC 101832 / S2 / LL)).